The chain runs to 485 residues: Protein nucleotidyltransferase YdiU (485 aa).

Gly90, Gly92, Arg93, Lys113, Asp125, Gly126, Arg176, and Arg183 together coordinate ATP. Asp252 functions as the Proton acceptor in the catalytic mechanism. Positions 253 and 262 each coordinate Mg(2+). Residue Asp262 coordinates ATP.

The protein belongs to the SELO family. Mg(2+) serves as cofactor. The cofactor is Mn(2+).

The enzyme catalyses L-seryl-[protein] + ATP = 3-O-(5'-adenylyl)-L-seryl-[protein] + diphosphate. It catalyses the reaction L-threonyl-[protein] + ATP = 3-O-(5'-adenylyl)-L-threonyl-[protein] + diphosphate. The catalysed reaction is L-tyrosyl-[protein] + ATP = O-(5'-adenylyl)-L-tyrosyl-[protein] + diphosphate. It carries out the reaction L-histidyl-[protein] + UTP = N(tele)-(5'-uridylyl)-L-histidyl-[protein] + diphosphate. The enzyme catalyses L-seryl-[protein] + UTP = O-(5'-uridylyl)-L-seryl-[protein] + diphosphate. It catalyses the reaction L-tyrosyl-[protein] + UTP = O-(5'-uridylyl)-L-tyrosyl-[protein] + diphosphate. Its function is as follows. Nucleotidyltransferase involved in the post-translational modification of proteins. It can catalyze the addition of adenosine monophosphate (AMP) or uridine monophosphate (UMP) to a protein, resulting in modifications known as AMPylation and UMPylation. This Aliivibrio salmonicida (strain LFI1238) (Vibrio salmonicida (strain LFI1238)) protein is Protein nucleotidyltransferase YdiU.